The chain runs to 90 residues: uncharacterized protein (90 aa).

Residues 36–82 (DQEYSDAQMQLEDAVNALNKLWLSSNDQQREQLYRMRLQLQSLQNNM) are a coiled coil.

This is an uncharacterized protein from Bacillus subtilis (strain 168).